The chain runs to 529 residues: Glucose-6-phosphate isomerase (529 aa).

Glu-322 (proton donor) is an active-site residue. Active-site residues include His-351 and Lys-455.

It belongs to the GPI family.

The protein resides in the cytoplasm. The catalysed reaction is alpha-D-glucose 6-phosphate = beta-D-fructose 6-phosphate. It functions in the pathway carbohydrate biosynthesis; gluconeogenesis. It participates in carbohydrate degradation; glycolysis; D-glyceraldehyde 3-phosphate and glycerone phosphate from D-glucose: step 2/4. Catalyzes the reversible isomerization of glucose-6-phosphate to fructose-6-phosphate. This Cyanothece sp. (strain PCC 7425 / ATCC 29141) protein is Glucose-6-phosphate isomerase.